The sequence spans 319 residues: Ribose-phosphate pyrophosphokinase (319 aa).

ATP-binding positions include 40–42 (DGE) and 99–100 (RQ). Residues His-134 and Asp-174 each coordinate Mg(2+). The active site involves Lys-198. D-ribose 5-phosphate contacts are provided by residues Arg-200, Asp-224, and 228–232 (DTAGT).

It belongs to the ribose-phosphate pyrophosphokinase family. Class I subfamily. In terms of assembly, homohexamer. Mg(2+) serves as cofactor.

It is found in the cytoplasm. It carries out the reaction D-ribose 5-phosphate + ATP = 5-phospho-alpha-D-ribose 1-diphosphate + AMP + H(+). It participates in metabolic intermediate biosynthesis; 5-phospho-alpha-D-ribose 1-diphosphate biosynthesis; 5-phospho-alpha-D-ribose 1-diphosphate from D-ribose 5-phosphate (route I): step 1/1. Functionally, involved in the biosynthesis of the central metabolite phospho-alpha-D-ribosyl-1-pyrophosphate (PRPP) via the transfer of pyrophosphoryl group from ATP to 1-hydroxyl of ribose-5-phosphate (Rib-5-P). This chain is Ribose-phosphate pyrophosphokinase, found in Coxiella burnetii (strain RSA 493 / Nine Mile phase I).